Consider the following 3498-residue polypeptide: Mediator of RNA polymerase II transcription subunit 12 (3498 aa).

Disordered regions lie at residues 365-456 (IKQH…HTDI), 497-764 (GGVG…EPEK), 2209-2576 (AKKR…AYMK), 2589-2620 (ENNR…EAYA), 2637-2889 (LRKE…KEKQ), and 2917-3498 (NVAG…PNQY). Residues 368–394 (HEKRKAGSLKKSERRRRRGLSKNRPKK) are compositionally biased toward basic residues. Over residues 404-416 (SLDHDKVQIKQEP) the composition is skewed to basic and acidic residues. 2 stretches are compositionally biased toward polar residues: residues 424-440 (GQQS…SHQY) and 512-536 (SNPT…SASP). Positions 539 to 570 (SVDKENECEKKEDESKTKEKNKDKEKDKEKEK) form a coiled coil. Basic and acidic residues-rich tracts occupy residues 540–578 (VDKE…HTND) and 593–614 (ANDK…TGKE). Residues 621–630 (SKTAKTSTSA) show a composition bias toward low complexity. 3 stretches are compositionally biased toward basic and acidic residues: residues 691-719 (EVDK…KKAD), 738-764 (ESEK…EPEK), and 2209-2285 (AKKR…KRAS). Residues 2142–3498 (QTTRLDKVAK…YPNQQPPNQY (1357 aa)) form a required for nuclear localization region. The stretch at 2203–2290 (VIDEEEAKKR…EKRASDAAAA (88 aa)) forms a coiled coil. 2 stretches are compositionally biased toward low complexity: residues 2342 to 2360 (RADT…APIA) and 2409 to 2431 (LADA…SSMP). The stretch at 2395-2420 (RNLLNRKKEEKRNSLADASAAAAAAN) forms a coiled coil. The segment covering 2444-2456 (QSAGATQQLQGMQ) has biased composition (polar residues). Positions 2459-2479 (QMGGSMSGMNQNMGGMNQSMS) are enriched in low complexity. The span at 2514 to 2530 (NRSSGPVSSETRQQIME) shows a compositional bias: polar residues. 3 stretches are compositionally biased toward basic and acidic residues: residues 2547 to 2576 (QKQR…AYMK), 2589 to 2616 (ENNR…RAAE), and 2637 to 2724 (LRKE…EQQR). The segment covering 2725-2770 (RSQQNPYMNQQGQYSQQPPPSYQQSSYPNNYQPGQQGNQPPNYQQP) has biased composition (low complexity). Residues 2771 to 2783 (SHQSMQQGHQAGY) show a composition bias toward polar residues. Over residues 2784–2810 (QQTSNQMQMNMQQQQNRQQGGPQQSFS) the composition is skewed to low complexity. Composition is skewed to polar residues over residues 2816–2827 (NQPSQPGYSGYN), 2842–2852 (RNPFGNQQDMQ), 2868–2881 (HAQQ…QLSL), and 2926–2956 (GQQQ…SSNP). Residues 2957 to 2993 (QGGMQSYQQQQPVLGQPGPIQTGQSTQQQIPAQSQQQ) are compositionally biased toward low complexity. The segment covering 2994–3009 (YNSGRPQMHTTPTKND) has biased composition (polar residues). Positions 3039 to 3100 (GQNVPGGYQQ…NVSQSQSAAQ (62 aa)) are enriched in low complexity. Polar residues predominate over residues 3103–3127 (RPSQDSAYQQSGYNQTGNQSYQRPD). 2 stretches are compositionally biased toward low complexity: residues 3128 to 3184 (QQQQ…SAQY) and 3192 to 3223 (QGYD…QTQQ). A compositionally biased stretch (polar residues) spans 3231–3253 (SGYTANSGGSSNILNQSMEESGL). A compositionally biased stretch (low complexity) spans 3254 to 3311 (NQGFSGASSNASSQQGGSSQMQQSGYGMPGNQMQMQQNQKQQVQRGMPTGMGQTNMGQ). A compositionally biased stretch (gly residues) spans 3312 to 3321 (SGMGQSGMGQ). Composition is skewed to low complexity over residues 3336–3356 (QGQQ…NQRG) and 3370–3408 (QQQH…QGQQ). Residues 3414-3425 (PSQQQSGAAYSN) are compositionally biased toward polar residues. The segment covering 3426-3436 (QMQFQGVRQGQ) has biased composition (low complexity). Residues 3437–3446 (QGMGGMGGSG) show a composition bias toward gly residues. Positions 3447–3498 (QQQPQTQPHGSNQYYQQQQDQRMQQQPQQPGQQQQHGYGMGQYPNQQPPNQY) are enriched in low complexity.

This sequence belongs to the Mediator complex subunit 12 family. As to quaternary structure, component of the Mediator complex. In terms of tissue distribution, ubiquitously expressed.

It localises to the nucleus. Functionally, component of the Mediator complex, a coactivator involved in regulated gene transcription of nearly all RNA polymerase II-dependent genes. Mediator functions as a bridge to convey information from gene-specific regulatory proteins to the basal RNA polymerase II transcription machinery. Mediator is recruited to promoters by direct interactions with regulatory proteins and serves as a scaffold for the assembly of a functional preinitiation complex with RNA polymerase II and the general transcription factors. Functions downstream of let-60 during vulval induction. Required for asymmetric division of T-cells and for hypodermal development. This chain is Mediator of RNA polymerase II transcription subunit 12 (dpy-22), found in Caenorhabditis elegans.